Reading from the N-terminus, the 316-residue chain is Apolipoprotein E (316 aa).

The first 18 residues, 1 to 18, serve as a signal peptide directing secretion; sequence MKVLWVALVITLLAGCQA. 8 tandem repeats follow at residues 79–100, 101–122, 123–144, 145–166, 167–188, 189–210, 211–232, and 233–254. Residues 79 to 254 are 8 X 22 AA approximate tandem repeats; the sequence is VLMDETMKEV…HLEEMREQLE (176 aa). Met142 bears the Methionine sulfoxide mark. The tract at residues 157–167 is LDL and other lipoprotein receptors binding; it reads HLRKLRKRLLR. Residue 161–164 participates in heparin binding; it reads LRKR. The interval 209–289 is lipid-binding and lipoprotein association; that stretch reads AATVGTLASQ…SWFEPLVEDM (81 aa). Residue 228-235 coordinates heparin; that stretch reads HQKLRGRV. The tract at residues 265 to 316 is homooligomerization; that stretch reads SQMRLQAEAFQARLKSWFEPLVEDMQRQWAGLVEKVQLAMATSSTSAPSENH. A specificity for association with VLDL region spans residues 277-289; the sequence is RLKSWFEPLVEDM.

This sequence belongs to the apolipoprotein A1/A4/E family. In terms of assembly, homotetramer. May interact with ABCA1; functionally associated with ABCA1 in the biogenesis of HDLs. May interact with APP/A4 amyloid-beta peptide; the interaction is extremely stable in vitro but its physiological significance is unclear. May interact with MAPT. May interact with MAP2. In the cerebrospinal fluid, interacts with secreted SORL1. Interacts with PMEL; this allows the loading of PMEL luminal fragment on ILVs to induce fibril nucleation. In terms of processing, APOE exists as multiple glycosylated and sialylated glycoforms within cells and in plasma. The extent of glycosylation and sialylation are tissue and context specific. Glycated in plasma VLDL. Post-translationally, phosphorylated by FAM20C in the extracellular medium.

The protein resides in the secreted. Its subcellular location is the extracellular space. It localises to the extracellular matrix. It is found in the extracellular vesicle. The protein localises to the endosome. The protein resides in the multivesicular body. Its function is as follows. APOE is an apolipoprotein, a protein associating with lipid particles, that mainly functions in lipoprotein-mediated lipid transport between organs via the plasma and interstitial fluids. APOE is a core component of plasma lipoproteins and is involved in their production, conversion and clearance. Apolipoproteins are amphipathic molecules that interact both with lipids of the lipoprotein particle core and the aqueous environment of the plasma. As such, APOE associates with chylomicrons, chylomicron remnants, very low density lipoproteins (VLDL) and intermediate density lipoproteins (IDL) but shows a preferential binding to high-density lipoproteins (HDL). It also binds a wide range of cellular receptors including the LDL receptor/LDLR and the very low-density lipoprotein receptor/VLDLR that mediate the cellular uptake of the APOE-containing lipoprotein particles. Finally, APOE also has a heparin-binding activity and binds heparan-sulfate proteoglycans on the surface of cells, a property that supports the capture and the receptor-mediated uptake of APOE-containing lipoproteins by cells. The sequence is that of Apolipoprotein E (APOE) from Lipotes vexillifer (Yangtze river dolphin).